The chain runs to 153 residues: ORM1-like protein 3 (153 aa).

The segment at 1–17 (MNVGTAHSEVNPNTRVM) is important for ceramide level-sensing. Topologically, residues 1–21 (MNVGTAHSEVNPNTRVMNSRG) are cytoplasmic. The next 2 membrane-spanning stretches (helical) occupy residues 22 to 44 (IWLSYVLAIGLLHIVLLSIPFVS) and 45 to 63 (VPVVWTLTNLIHNMGMYIF). The Cytoplasmic segment spans residues 64–100 (LHTVKGTPFETPDQGKARLLTHWEQMDYGVQFTASRK). A helical membrane pass occupies residues 101 to 117 (FLTITPIVLYFLTSFYT). Topologically, residues 118 to 121 (KYDQ) are lumenal. The helical transmembrane segment at 122 to 139 (IHFVLNTVSLMSVLIPKL) threads the bilayer. A Hydroxyproline modification is found at proline 137. Residues 140–153 (PQLHGVRIFGINKY) are Cytoplasmic-facing.

It belongs to the ORM family. As to quaternary structure, ceramide-sensitive subunit of the serine palmitoyltransferase (SPT) complex, which is also composed of SPTLC1, SPTLC2/3 and SPTSSA/B. Post-translationally, when hydroxylated at Pro-137, ubiquitinated via 'Lys-48'-linkage, leading to proteasomal degradation. In endothelial cells, ORMDL3 proteasomal degradation is controlled by the sphingosine 1-phosphate receptor signaling pathway. In terms of tissue distribution, widely expressed. Expressed in adult and fetal heart, brain, lung, liver, skeletal muscle and kidney. Expressed in adult pancreas and placenta and in fetal spleen and thymus.

It is found in the endoplasmic reticulum membrane. Its function is as follows. Plays an essential role in the homeostatic regulation of sphingolipid de novo biosynthesis by modulating the activity of the serine palmitoyltransferase (SPT) in response to ceramide levels. When complexed to SPT, the binding of ceramides to its N-terminus stabilizes a conformation that block SPT substrate entry, hence preventing SPT catalytic activity. Through this mechanism, maintains ceramide levels at sufficient concentrations for the production of complex sphingolipids, but which prevents the accumulation of ceramides to levels that trigger apoptosis. This chain is ORM1-like protein 3 (ORMDL3), found in Homo sapiens (Human).